The chain runs to 118 residues: Large ribosomal subunit protein bL17 (118 aa).

The protein belongs to the bacterial ribosomal protein bL17 family. In terms of assembly, part of the 50S ribosomal subunit. Contacts protein L32.

The protein is Large ribosomal subunit protein bL17 of Onion yellows phytoplasma (strain OY-M).